We begin with the raw amino-acid sequence, 65 residues long: MPKMKTKKSASKRFTARPNGSFKRGQAFKRHILTKKTTKNKRHLRGTQDVHETNLKSVRAMMPYA.

Residues 1–15 are compositionally biased toward basic residues; it reads MPKMKTKKSASKRFT. The interval 1 to 27 is disordered; the sequence is MPKMKTKKSASKRFTARPNGSFKRGQA.

This sequence belongs to the bacterial ribosomal protein bL35 family.

This is Large ribosomal subunit protein bL35 from Cupriavidus pinatubonensis (strain JMP 134 / LMG 1197) (Cupriavidus necator (strain JMP 134)).